The following is a 251-amino-acid chain: 5-oxoprolinase subunit A (251 aa).

This sequence belongs to the LamB/PxpA family. Forms a complex composed of PxpA, PxpB and PxpC.

The catalysed reaction is 5-oxo-L-proline + ATP + 2 H2O = L-glutamate + ADP + phosphate + H(+). Catalyzes the cleavage of 5-oxoproline to form L-glutamate coupled to the hydrolysis of ATP to ADP and inorganic phosphate. In Vibrio campbellii (strain ATCC BAA-1116), this protein is 5-oxoprolinase subunit A.